Consider the following 391-residue polypeptide: Transposase for insertion sequence element IS905 (391 aa).

The protein belongs to the transposase mutator family.

Functionally, required for the transposition of the insertion element. This Lactococcus lactis subsp. lactis (strain IL1403) (Streptococcus lactis) protein is Transposase for insertion sequence element IS905 (tra905).